A 271-amino-acid chain; its full sequence is Uridine-cytidine kinase 1-A (271 aa).

An ATP-binding site is contributed by G24–T32. Positions 81, 109, 114, 163, 172, and 180 each coordinate substrate. Position 209 (D209) interacts with ATP. Residues S241–H271 are disordered. Positions T262–H271 are enriched in basic and acidic residues.

It belongs to the uridine kinase family.

The catalysed reaction is uridine + ATP = UMP + ADP + H(+). The enzyme catalyses cytidine + ATP = CMP + ADP + H(+). It participates in pyrimidine metabolism; CTP biosynthesis via salvage pathway; CTP from cytidine: step 1/3. Its pathway is pyrimidine metabolism; UMP biosynthesis via salvage pathway; UMP from uridine: step 1/1. In terms of biological role, phosphorylates uridine and cytidine to uridine monophosphate and cytidine monophosphate. Does not phosphorylate deoxyribonucleosides or purine ribonucleosides. Can use ATP or GTP as a phosphate donor. In Xenopus laevis (African clawed frog), this protein is Uridine-cytidine kinase 1-A (uck1-a).